The sequence spans 290 residues: Serpentine receptor class U-26 (290 aa).

7 consecutive transmembrane segments (helical) span residues 31–51, 70–90, 112–134, 158–178, 185–205, 213–233, and 262–282; these read LPMLFLLVPILYIPITIIIIL, LLSAISISQCMCLLFFLADFL, FITILTIFTYHINYSTMIFPFLV, FSIPFICVYPIIFTFFMFPAI, AYPFPFGAIIFRIERTFFGLV, NTLFWMTCCIITNFILLLLLI, and MIFSYLSNAMIVFLLLELHIV.

It belongs to the nematode receptor-like protein sru family.

Its subcellular location is the membrane. The protein is Serpentine receptor class U-26 (sru-26) of Caenorhabditis elegans.